Consider the following 242-residue polypeptide: Protein HTATIP2 (242 aa).

Residue alanine 2 is modified to N-acetylalanine. The interval 2–25 (AETEALSKLREDFRMQNKSVFILG) is required for interaction with elongation factor EEF1A1. NADPH contacts are provided by serine 27, glycine 28, glutamate 29, threonine 30, arginine 52, arginine 53, leucine 92, glycine 93, tyrosine 143, lysine 147, and arginine 178. Catalysis depends on tyrosine 143, which acts as the Proton acceptor. Residue lysine 147 is part of the active site.

Monomer. Forms homodimers during oxidative stress. Interacts (via N-terminus) with elongation factor EEF1A1 (via middle-region); the interaction is direct and competes with EEF1A1 binding to guanyl-nucleotide exchange factor EEF1B2, thereby inhibiting GDP for GTP exchange and reactivation of EEF1A1. Interacts with nuclear transport receptors XPO4, IPO5/RANBP5, IPO7, IPO9 and KPNB1 as well as GCN1L1/GCN1 and LRPPRC probably through their HEAT repeats. Binds NCOA5/CIA.

Its subcellular location is the cytoplasm. Represses translation by preventing reactivation of elongation factor eEF1A. May also inhibit nuclear import by competing with nuclear import substrates for binding to a subset of nuclear transport receptors. Has additionally been proposed to act as a redox sensor involved in cellular oxidative stress surveillance. This is Protein HTATIP2 (HTATIP2) from Pan paniscus (Pygmy chimpanzee).